The following is a 733-amino-acid chain: Alpha-galactosidase 1 (733 aa).

D480 (nucleophile) is an active-site residue. D550 serves as the catalytic Proton donor.

The protein belongs to the glycosyl hydrolase 36 family.

The enzyme catalyses Hydrolysis of terminal, non-reducing alpha-D-galactose residues in alpha-D-galactosides, including galactose oligosaccharides, galactomannans and galactolipids.. Functionally, alpha-galactosidase associated with the raffinose operon. The protein is Alpha-galactosidase 1 (agaR) of Pediococcus pentosaceus.